Reading from the N-terminus, the 39-residue chain is TIINVKCTSPKQCLKPCKDLYGPHAGAKCMNGKCKCYNN.

3 disulfide bridges follow: cysteine 7–cysteine 29, cysteine 13–cysteine 34, and cysteine 17–cysteine 36. Asparagine 39 is modified (asparagine amide).

The protein belongs to the short scorpion toxin superfamily. Potassium channel inhibitor family. Alpha-KTx 02 subfamily. As to expression, expressed by the venom gland.

The protein localises to the secreted. In terms of biological role, blocks Kv1.3/KCNA3 voltage-gated potassium channels of human T-lymphocytes (Kd=0.25 nM). In Centruroides elegans (Bark scorpion), this protein is Potassium channel toxin alpha-KTx 2.9.